Consider the following 823-residue polypeptide: MFYVIGGITVSVVAFFFTIKFLFELAARVVSFLQNEDRERRGDRTIYDYVRGNYLDPRSCKVSWDWKDPYEVGHSMAFRVHLFYKNGQPFPAHRPVGLRVHISHVELAVEIPVTQEVLQEPNSNVVKVAFTVRKAGRYEITVKLGGLNVAYSPYYKIFQPGMVVPSKTKIVCHFSTLVLTCGQPHTLQIVPRDEYDNPTNNSMSLRDEHNYTLSIHELGPQEEESTGVSFEKSVTSNRQTFQVFLRLTLHSRGCFHACISYQNQPINNGEFDIIVLSEDEKNIVERNVSTSGVSIYFEAYLYNATNCSSTPWHLPPMHMTSSQRRPSTAVDEEDEDSPSECHTPEKVKKPKKVYCYVSPKQFSVKEFYLKIIPWRLYTFRVCPGTKFSYLGPDPVHKLLTLVVDDGIQPPVELSCKERNILAATFIRSLHKNIGGSETFQDKVNFFQRELRQVHMKRPHSKVTLKVSRHALLESSLKATRNFSISDWSKNFEVVFQDEEALDWGGPRREWFELICKALFDTTNQLFTRFSDNNQALVHPNPNRPAHLRLKMYEFAGRLVGKCLYESSLGGAYKQLVRARFTRSFLAQIIGLRMHYKYFETDDPEFYKSKVCFILNNDMSEMELVFAEEKYNKSGQLDKVVELMTGGAQTPVTNANKIFYLNLLAQYRLASQVKEEVEHFLKGLNELVPENLLAIFDENELELLMCGTGDISVSDFKAHAVVVGGSWHFREKVMRWFWTVVSSLTQEELARLLQFTTGSSQLPPGGFAALCPSFQIIAAPTHSTLPTAHTCFNQLCLPTYDSYEEVHRMLQLAISEGCEGFGML.

The Filamin repeat unit spans residues 52 to 158 (GNYLDPRSCK…VAYSPYYKIF (107 aa)). Residues 315–345 (PPMHMTSSQRRPSTAVDEEDEDSPSECHTPE) are disordered. The segment at 483 to 789 (SISDWSKNFE…THSTLPTAHT (307 aa)) is interaction with SOCS2. Residues 483 to 823 (SISDWSKNFE…SEGCEGFGML (341 aa)) form the HECT domain. Residue C790 is the Glycyl thioester intermediate of the active site.

As to quaternary structure, interacts with SOCS2. Interacts (via HECT domain) with HTRA2, DIABLO/SMAC and SEPTIN4; in the cytoplasm following induction of apoptosis. Post-translationally, autoubiquitinated in vitro in the presence of E2 enzyme UBE2D1/UBCH5A.

It carries out the reaction S-ubiquitinyl-[E2 ubiquitin-conjugating enzyme]-L-cysteine + [acceptor protein]-L-lysine = [E2 ubiquitin-conjugating enzyme]-L-cysteine + N(6)-ubiquitinyl-[acceptor protein]-L-lysine.. It functions in the pathway protein modification; protein ubiquitination. E3 ubiquitin-protein ligase that catalyzes 'Lys-11'- or 'Lys-33'-linked polyubiquitin chains, with some preference for 'Lys-33' linkages. E3 ubiquitin-protein ligases accept ubiquitin from an E2 ubiquitin-conjugating enzyme in the form of a thioester and then directly transfers the ubiquitin to targeted substrates. Ubiquitinates SEPTIN4, DIABLO/SMAC and HTRA2 in vitro. Modulates pulmonary inflammation by targeting SOCS2 for ubiquitination and subsequent degradation by the proteasome. This is Apoptosis-resistant E3 ubiquitin protein ligase 1 from Homo sapiens (Human).